A 301-amino-acid polypeptide reads, in one-letter code: Asialoglycoprotein receptor 2 (301 aa).

Residues 1-29 (MEKDFQDIQQLDSEENDHQLIGDEEQGSH) form a disordered region. Topologically, residues 1–58 (MEKDFQDIQQLDSEENDHQLIGDEEQGSHVQNLRTENPRWGGQPPSRPFPQRLCSKFR) are cytoplasmic. Residue S13 is modified to Phosphoserine. The S-palmitoyl cysteine moiety is linked to residue C54. The helical; Signal-anchor for type II membrane protein transmembrane segment at 59-79 (LSLLALAFNILLLVVICVVSS) threads the bilayer. The Extracellular portion of the chain corresponds to 80–301 (QSMQLQKEFW…ACERKRDITY (222 aa)). N-linked (GlcNAc...) asparagine glycans are attached at residues N97, N119, and N165. One can recognise a C-type lectin domain in the interval 169–295 (CCPVNWVEFG…QQVNRWACER (127 aa)). 3 cysteine pairs are disulfide-bonded: C170–C181, C198–C293, and C271–C285.

In terms of assembly, interacts with LASS2. In terms of tissue distribution, expressed exclusively in hepatic parenchymal cells.

It localises to the membrane. In terms of biological role, mediates the endocytosis of plasma glycoproteins to which the terminal sialic acid residue on their complex carbohydrate moieties has been removed. The receptor recognizes terminal galactose and N-acetylgalactosamine units. After ligand binding to the receptor, the resulting complex is internalized and transported to a sorting organelle, where receptor and ligand are disassociated. The receptor then returns to the cell membrane surface. The chain is Asialoglycoprotein receptor 2 (Asgr2) from Rattus norvegicus (Rat).